The following is a 111-amino-acid chain: C-type lectin lectoxin-Enh1 (111 aa).

Positions 1-23 are cleaved as a signal peptide; sequence MGQFTVVSLGLLAMFLSLSGAKG. Residues Cys26 and Cys37 are joined by a disulfide bond. Residues 33–108 form the C-type lectin domain; the sequence is RNGVCNKLFP…CASLHPFICQ (76 aa). The Mannose-binding signature appears at 72 to 74; it reads EPN. Ca(2+) contacts are provided by Glu80, Asn95, and Asp96. Cysteines 82 and 99 form a disulfide.

This sequence belongs to the true venom lectin family. In terms of tissue distribution, expressed by the venom gland.

The protein resides in the secreted. In terms of biological role, mannose-binding lectin which recognizes specific carbohydrate structures and agglutinates a variety of animal cells by binding to cell-surface glycoproteins and glycolipids. May be a calcium-dependent lectin. This is C-type lectin lectoxin-Enh1 from Pseudoferania polylepis (Macleay's water snake).